A 664-amino-acid chain; its full sequence is MKTGLFFLCLLGTAAAIPTNARLLSDHSKPTAETVAPDNTAIPSLRAEAEENEKETAVSTEDDSHHKAEKSSVLKSKEESHEQSAEQGKSSSQELGLKDQEDSDGHLSVNLEYAPTEGTLDIKEDMSEPQEKKLSENTDFLAPGVSSFTDSNQQESITKREENQEQPRNYSHHQLNRSSKHSQGLRDQGNQEQDPNISNGEEEEEKEPGEVGTHNDNQERKTELPREHANSKQEEDNTQSDDILEESDQPTQVSKMQEDEFDQGNQEQEDNSNAEMEEENASNVNKHIQETEWQSQEGKTGLEAISNHKETEEKTVSEALLMEPTDDGNTTPRNHGVDDDGDDDGDDGGTDGPRHSASDDYFIPSQAFLEAERAQSIAYHLKIEEQREKVHENENIGTTEPGEHQEAKKAENSSNEEETSSEGNMRVHAVDSCMSFQCKRGHICKADQQGKPHCVCQDPVTCPPTKPLDQVCGTDNQTYASSCHLFATKCRLEGTKKGHQLQLDYFGACKSIPTCTDFEVIQFPLRMRDWLKNILMQLYEANSEHAGYLNEKQRNKVKKIYLDEKRLLAGDHPIDLLLRDFKKNYHMYVYPVHWQFSELDQHPMDRVLTHSELAPLRASLVPMEHCITRFFEECDPNKDKHITLKEWGHCFGIKEEDIDENLLF.

Residues 1–16 (MKTGLFFLCLLGTAAA) form the signal peptide. The segment at 25–34 (SDHSKPTAET) is O-glycosylated at one additional site. Residues 28-360 (SKPTAETVAP…DGPRHSASDD (333 aa)) are disordered. T31 and T40 each carry an O-linked (GalNAc...) threonine glycan. The O-linked (GalNAc...) serine glycan is linked to S44. The segment covering 62-84 (DDSHHKAEKSSVLKSKEESHEQS) has biased composition (basic and acidic residues). S76, S84, and S92 each carry phosphoserine. A compositionally biased stretch (polar residues) spans 85–94 (AEQGKSSSQE). Residues 96 to 105 (GLKDQEDSDG) show a composition bias toward basic and acidic residues. O-linked (GalNAc...) threonine glycosylation is present at T116. The span at 120 to 136 (LDIKEDMSEPQEKKLSE) shows a compositional bias: basic and acidic residues. Residues 146-156 (SSFTDSNQQES) are compositionally biased toward polar residues. N169 carries an N-linked (GlcNAc...) asparagine glycan. Positions 170–180 (YSHHQLNRSSK) are enriched in basic residues. S171 is subject to Phosphoserine. Residues N176 and N196 are each glycosylated (N-linked (GlcNAc...) asparagine). A compositionally biased stretch (polar residues) spans 188-199 (QGNQEQDPNISN). Residues 216-235 (DNQERKTELPREHANSKQEE) are compositionally biased toward basic and acidic residues. Acidic residues-rich tracts occupy residues 236 to 248 (DNTQ…EESD) and 259 to 280 (DEFD…EEEN). S272 carries the post-translational modification Phosphoserine. Residue N280 is glycosylated (N-linked (GlcNAc...) asparagine). Residues 306-316 (SNHKETEEKTV) are compositionally biased toward basic and acidic residues. T331 carries O-linked (GalNAc...) threonine glycosylation. The span at 339-349 (DDGDDDGDDGG) shows a compositional bias: acidic residues. A phosphoserine mark is found at S358 and S365. The segment at 388-426 (EKVHENENIGTTEPGEHQEAKKAENSSNEEETSSEGNMR) is disordered. O-linked (GalNAc...) threonine glycosylation is present at T398. The segment covering 401-411 (PGEHQEAKKAE) has biased composition (basic and acidic residues). N412 carries an N-linked (GlcNAc...) asparagine glycan. At S420 the chain carries Phosphoserine. The Follistatin-like domain occupies 432-454 (SCMSFQCKRGHICKADQQGKPHC). 7 disulfides stabilise this stretch: C433–C444, C438–C454, C456–C490, C462–C483, C472–C509, C515–C626, and C634–C650. The Kazal-like domain maps to 450 to 511 (GKPHCVCQDP…QLDYFGACKS (62 aa)). N476 carries N-linked (GlcNAc...) asparagine glycosylation. The region spanning 622-657 (PMEHCITRFFEECDPNKDKHITLKEWGHCFGIKEED) is the EF-hand domain. Ca(2+) is bound by residues D635, N637, D639, H641, and E646.

Belongs to the SPARC family. In terms of processing, N- and O-glycosylated. O-glycosylated with a core 1 or possibly core 8 glycan. In terms of tissue distribution, highly expressed in lymph node, brain, heart, lung, skeletal muscle, ovary, small intestine, and colon, with lower levels in placenta, pancreas, testis, spleen, and thymus, and no expression in kidney, liver, and peripheral blood leukocytes.

The protein resides in the secreted. Its subcellular location is the extracellular space. It localises to the extracellular matrix. The protein is SPARC-like protein 1 (SPARCL1) of Homo sapiens (Human).